Reading from the N-terminus, the 171-residue chain is UPF0316 protein Exig_2248 (171 aa).

3 helical membrane passes run 4 to 24 (ILLILLLQLIYVPVLTLRTIM), 31 to 51 (IIAGVLGTVETLIYIFALGIV), and 57 to 77 (TVGMIVYALGFGLGILIGGFV).

It belongs to the UPF0316 family.

Its subcellular location is the cell membrane. This chain is UPF0316 protein Exig_2248, found in Exiguobacterium sibiricum (strain DSM 17290 / CCUG 55495 / CIP 109462 / JCM 13490 / 255-15).